The following is a 129-amino-acid chain: Small ribosomal subunit protein uS11 (129 aa).

It belongs to the universal ribosomal protein uS11 family. Part of the 30S ribosomal subunit. Interacts with proteins S7 and S18. Binds to IF-3.

Located on the platform of the 30S subunit, it bridges several disparate RNA helices of the 16S rRNA. Forms part of the Shine-Dalgarno cleft in the 70S ribosome. The chain is Small ribosomal subunit protein uS11 from Maridesulfovibrio salexigens (strain ATCC 14822 / DSM 2638 / NCIMB 8403 / VKM B-1763) (Desulfovibrio salexigens).